Reading from the N-terminus, the 188-residue chain is Peptidyl-tRNA hydrolase (188 aa).

A tRNA-binding site is contributed by Phe-15. His-20 serves as the catalytic Proton acceptor. TRNA is bound by residues Tyr-64, Asn-66, and Asn-112.

It belongs to the PTH family. In terms of assembly, monomer.

The protein resides in the cytoplasm. The catalysed reaction is an N-acyl-L-alpha-aminoacyl-tRNA + H2O = an N-acyl-L-amino acid + a tRNA + H(+). Its function is as follows. Hydrolyzes ribosome-free peptidyl-tRNAs (with 1 or more amino acids incorporated), which drop off the ribosome during protein synthesis, or as a result of ribosome stalling. Catalyzes the release of premature peptidyl moieties from peptidyl-tRNA molecules trapped in stalled 50S ribosomal subunits, and thus maintains levels of free tRNAs and 50S ribosomes. The protein is Peptidyl-tRNA hydrolase of Borreliella burgdorferi (strain ATCC 35210 / DSM 4680 / CIP 102532 / B31) (Borrelia burgdorferi).